Consider the following 104-residue polypeptide: MSNYAIIKTGGKQLKVEEGSVIYVEKLNVEAGQTVTFDEVIFVGGETTKVGAPLVEGATVVGEVEKHGKQKKVVTFQYKPKKHSHRKQGHRQPYTKVVIKSVNA.

This sequence belongs to the bacterial ribosomal protein bL21 family. In terms of assembly, part of the 50S ribosomal subunit. Contacts protein L20.

This protein binds to 23S rRNA in the presence of protein L20. This Lactococcus lactis subsp. lactis (strain IL1403) (Streptococcus lactis) protein is Large ribosomal subunit protein bL21.